A 523-amino-acid polypeptide reads, in one-letter code: Xanthotoxin 5-hydroxylase CYP82C2 (523 aa).

The chain crosses the membrane as a helical span at residues 1–21 (MDTSLFSLFVPILVFVFIALF). C462 is a binding site for heme.

It belongs to the cytochrome P450 family. Requires heme as cofactor.

The protein resides in the membrane. It catalyses the reaction xanthotoxin + reduced [NADPH--hemoprotein reductase] + O2 = 5-hydroxyxanthotoxin + oxidized [NADPH--hemoprotein reductase] + H2O + 2 H(+). The enzyme catalyses indole-3-carbonyl nitrile + reduced [NADPH--hemoprotein reductase] + O2 = 4-hydroxy-indole-3-carbonyl nitrile + oxidized [NADPH--hemoprotein reductase] + H2O + H(+). Functionally, involved in the biosynthetic pathway to 4-hydroxyindole-3-carbonyl nitrile (4-OH-ICN), a cyanogenic metabolite required for inducible pathogen defense. Converts indole-3-carbonyl nitrile (ICN) into 4-OH-ICN. Can hydroxylate xanthotoxin (8-methoxypsoralen) to form 5-hydroxyxanthotoxin (5-hydroxy-8-methoxypsoralen) in vivo and in vitro. The polypeptide is Xanthotoxin 5-hydroxylase CYP82C2 (Arabidopsis thaliana (Mouse-ear cress)).